Consider the following 796-residue polypeptide: RalBP1-associated Eps domain-containing protein 1 (796 aa).

Residues 10 to 113 enclose the EH 1 domain; sequence EQKYYSDLFS…SKNEQESRHA (104 aa). Positions 105–237 are disordered; sequence KNEQESRHAA…ENWVSFADTP (133 aa). The segment covering 115-126 has biased composition (polar residues); sequence SYSSDSENQGSY. Ser143, Ser145, Ser162, Ser166, and Ser170 each carry phosphoserine. Positions 145-156 are enriched in polar residues; the sequence is SHDTVQPRTSAD. Thr173 carries the post-translational modification Phosphothreonine. 2 positions are modified to phosphoserine: Ser272 and Ser273. The EH 2 domain maps to 285 to 374; that stretch reads QRQYYVNQFK…ESLMPKLIDL (90 aa). Tyr288 carries the post-translational modification Phosphotyrosine. Phosphoserine is present on Ser307. One can recognise an EF-hand domain in the interval 318 to 353; that stretch reads LPILELSHIWELSDFDKDGALTLDEFCAAFHLVVAR. Ca(2+)-binding residues include Asp331, Asp333, Asp335, and Glu342. The interval 377–433 is disordered; sequence SADVGDQPGEVGYSGSPAEAPPSKSPSMPSLNQTWPELNQSSEQWETFSERSSSSQT. A compositionally biased stretch (polar residues) spans 407 to 433; that stretch reads LNQTWPELNQSSEQWETFSERSSSSQT. Phosphoserine is present on residues Ser475, Ser482, Ser489, and Ser540. A compositionally biased stretch (polar residues) spans 506-543; the sequence is GNTVADGYSSSDSFTSDPEQIGSNVTRQRSHSGTSPDN. Disordered regions lie at residues 506–624 and 638–725; these read GNTV…IPEQ and ASNV…QKTG. Thr544 carries the phosphothreonine modification. The segment covering 544 to 554 has biased composition (pro residues); sequence TAPPPPPPRPQ. Ser562 bears the Phosphoserine mark. Positions 563–574 are enriched in polar residues; it reads LDMNRTFTVTTG. Residues 575-584 show a composition bias toward low complexity; the sequence is QQQAGVVAHP. Positions 585–596 are enriched in pro residues; it reads PAVPPRPQPSQA. Over residues 612–623 the composition is skewed to polar residues; the sequence is THTSTSPQQIPE. Residues 652–796 form an interaction with RALBP1 region; sequence HPEVLPAEKA…LEQLRPFSHL (145 aa). Basic and acidic residues-rich tracts occupy residues 671 to 681 and 708 to 722; these read AKTDSKTEEKT and KSEDELRPEVDEHTQ. Ser709 and Ser740 each carry phosphoserine. Residues 751–791 adopt a coiled-coil conformation; that stretch reads SIRRNKETNTVLARLNSELQQQLKDVLEERISLEVQLEQLR.

Homodimer (Potential). Interacts with RAB11FIP2. Interacts with RALBP1, CRK and GRB2. Binding to RALBP1 does not affect its Ral-binding activity. Forms a complex with the SH3 domains of CRK and GRB2 which may link it to an EGF-responsive tyrosine kinase. Interacts with AMPH, ITSN1 (via SH3 domains) and SGIP1; may be involved in clathrin-mediated endocytosis. In terms of processing, EGF stimulates phosphorylation on Tyr-residues. Widely expressed with highest levels in heart and testis.

Its subcellular location is the membrane. The protein localises to the clathrin-coated pit. Functionally, may coordinate the cellular actions of activated EGF receptors and Ral-GTPases. This chain is RalBP1-associated Eps domain-containing protein 1 (REPS1), found in Homo sapiens (Human).